A 668-amino-acid chain; its full sequence is DNA ligase (668 aa).

NAD(+) contacts are provided by residues 34–38 (DAEYD), 83–84 (SL), and glutamate 113. The active-site N6-AMP-lysine intermediate is lysine 115. NAD(+)-binding residues include arginine 136, glutamate 170, lysine 286, and lysine 310. Positions 404, 407, 422, and 427 each coordinate Zn(2+). In terms of domain architecture, BRCT spans 590–668 (ESDSYFAGKT…EVKMLEELKK (79 aa)).

Belongs to the NAD-dependent DNA ligase family. LigA subfamily. The cofactor is Mg(2+). Mn(2+) serves as cofactor.

The catalysed reaction is NAD(+) + (deoxyribonucleotide)n-3'-hydroxyl + 5'-phospho-(deoxyribonucleotide)m = (deoxyribonucleotide)n+m + AMP + beta-nicotinamide D-nucleotide.. Functionally, DNA ligase that catalyzes the formation of phosphodiester linkages between 5'-phosphoryl and 3'-hydroxyl groups in double-stranded DNA using NAD as a coenzyme and as the energy source for the reaction. It is essential for DNA replication and repair of damaged DNA. In Bacillus pumilus (strain SAFR-032), this protein is DNA ligase.